The following is a 393-amino-acid chain: N-acyl-phosphatidylethanolamine-hydrolyzing phospholipase D (393 aa).

Methionine 1 is modified (N-acetylmethionine). Positions 1–16 (MDENESNQSLMTSSQY) are enriched in polar residues. Residues 1 to 40 (MDENESNQSLMTSSQYPKEAVRKRQNSARNSGGSDSSRFS) form a disordered region. Residues histidine 185 and histidine 187 each coordinate Zn(2+). Position 188 (tyrosine 188) interacts with an N-acyl-1,2-diacyl-sn-glycero-3-phosphoethanolamine. Zn(2+) contacts are provided by aspartate 189, histidine 190, and histidine 253. Deoxycholate is bound by residues lysine 256 and methionine 260. Residue aspartate 284 coordinates Zn(2+). Histidine 321 lines the an N-acyl-1,2-diacyl-sn-glycero-3-phosphoethanolamine pocket. Histidine 343 contacts Zn(2+). Deoxycholate is bound at residue alanine 348.

Belongs to the NAPE-PLD family. In terms of assembly, homodimer. Bile acids promote the assembly of inactive monomers into an active dimer and enable catalysis. The cofactor is Zn(2+). As to expression, widely expressed. Highest expression in brain, kidney and testis (at protein level). Expressed in adipose tissue (at protein level).

The protein resides in the golgi apparatus membrane. It is found in the early endosome membrane. The protein localises to the nucleus envelope. Its subcellular location is the nucleus. It localises to the nucleoplasm. It carries out the reaction an N-acyl-1,2-diacyl-sn-glycero-3-phosphoethanolamine + H2O = an N-acylethanolamine + a 1,2-diacyl-sn-glycero-3-phosphate + H(+). The catalysed reaction is N-butanoyl-1-hexadecanoyl-2-(9Z,12Z-octadecadienoyl)-sn-glycero-3-phosphoethanolamine + H2O = N-butanoyl ethanolamine + 1-hexadecanoyl-2-(9Z,12Z-octadecadienoyl)-sn-glycero-3-phosphate + H(+). The enzyme catalyses N-hexanoyl-1-hexadecanoyl-2-(9Z,12Z-octadecadienoyl)-sn-glycero-3-phosphoethanolamine + H2O = N-hexanoyl ethanolamine + 1-hexadecanoyl-2-(9Z,12Z-octadecadienoyl)-sn-glycero-3-phosphate + H(+). It catalyses the reaction N-octanoyl-1-hexadecanoyl-2-(9Z,12Z-octadecadienoyl)-sn-glycero-3-phosphoethanolamine + H2O = N-octanoyl ethanolamine + 1-hexadecanoyl-2-(9Z,12Z-octadecadienoyl)-sn-glycero-3-phosphate + H(+). It carries out the reaction N-decanoyl-1-hexadecanoyl-2-(9Z,12Z-octadecadienoyl)-sn-glycero-3-phosphoethanolamine + H2O = N-decanoyl ethanolamine + 1-hexadecanoyl-2-(9Z,12Z-octadecadienoyl)-sn-glycero-3-phosphate + H(+). The catalysed reaction is N-dodecanoyl-1,2-di-(9Z-octadecenoyl)-sn-glycero-3-phosphoethanolamine + H2O = N-dodecanoylethanolamine + 1,2-di-(9Z-octadecenoyl)-sn-glycero-3-phosphate + H(+). The enzyme catalyses N-tetradecanoyl-1,2-di-(9Z-octadecenoyl)-sn-glycero-3-phosphoethanolamine + H2O = N-tetradecanoylethanolamine + 1,2-di-(9Z-octadecenoyl)-sn-glycero-3-phosphate + H(+). It catalyses the reaction N-hexadecanoyl-1,2-di-(9Z-octadecenoyl)-sn-glycero-3-phosphoethanolamine + H2O = N-hexadecanoylethanolamine + 1,2-di-(9Z-octadecenoyl)-sn-glycero-3-phosphate + H(+). It carries out the reaction N,1-dihexadecanoyl-2-(9Z,12Z-octadecadienoyl)-sn-glycero-3-phosphoethanolamine + H2O = 1-hexadecanoyl-2-(9Z,12Z-octadecadienoyl)-sn-glycero-3-phosphate + N-hexadecanoylethanolamine + H(+). The catalysed reaction is N-octadecanoyl-1,2-di-(9Z-octadecenoyl)-sn-glycero-3-phosphoethanolamine + H2O = N-octadecanoyl ethanolamine + 1,2-di-(9Z-octadecenoyl)-sn-glycero-3-phosphate + H(+). The enzyme catalyses N,1,2-tri-(9Z-octadecenoyl)-sn-glycero-3-phosphoethanolamine + H2O = N-(9Z-octadecenoyl) ethanolamine + 1,2-di-(9Z-octadecenoyl)-sn-glycero-3-phosphate + H(+). It catalyses the reaction N-(5Z,8Z,11Z,14Z-eicosatetraenoyl)-1,2-diacyl-sn-glycero-3-phosphoethanolamine + H2O = N-(5Z,8Z,11Z,14Z-eicosatetraenoyl)-ethanolamine + a 1,2-diacyl-sn-glycero-3-phosphate + H(+). It carries out the reaction N-(5Z,8Z,11Z,14Z-eicosatetraenoyl)-1,2-di-(9Z-octadecenoyl)-sn-glycero-3-phosphoethanolamine + H2O = N-(5Z,8Z,11Z,14Z-eicosatetraenoyl)-ethanolamine + 1,2-di-(9Z-octadecenoyl)-sn-glycero-3-phosphate + H(+). The catalysed reaction is 1-O-(1Z-octadecenoyl)-2-(9Z-octadecenoyl)-sn-glycero-3-phospho-N-hexadecanoyl-ethanolamine + H2O = 1-O-(1Z-octadecenoyl)-2-(9Z-octadecenoyl)-sn-glycero-3-phosphate + N-hexadecanoylethanolamine + H(+). The enzyme catalyses N,1-diacyl-sn-glycero-3-phosphoethanolamine + H2O = an N-acylethanolamine + a 1-acyl-sn-glycero-3-phosphate + H(+). It catalyses the reaction N,1-dihexadecanoyl-sn-glycero-3-phosphoethanolamine + H2O = N-hexadecanoylethanolamine + 1-hexadecanoyl-sn-glycero-3-phosphate + H(+). It carries out the reaction N-(5Z,8Z,11Z,14Z-eicosatetraenoyl)-1-(9Z-octadecenoyl)-sn-glycero-3-phosphoethanolamine + H2O = N-(5Z,8Z,11Z,14Z-eicosatetraenoyl)-ethanolamine + 1-(9Z-octadecenoyl)-sn-glycero-3-phosphate + H(+). With respect to regulation, activated by divalent cations. Activated by bile acids. Its function is as follows. D-type phospholipase that hydrolyzes N-acyl-phosphatidylethanolamines (NAPEs) to produce bioactive N-acylethanolamines/fatty acid ethanolamides (NAEs/FAEs) and phosphatidic acid. Cleaves the terminal phosphodiester bond of diacyl- and alkenylacyl-NAPEs, primarily playing a role in the generation of long-chain saturated and monounsaturated NAEs in the brain. May control NAPE homeostasis in dopaminergic neuron membranes and regulate neuron survival, partly through RAC1 activation. As a regulator of lipid metabolism in the adipose tissue, mediates the crosstalk between adipocytes, gut microbiota and immune cells to control body temperature and weight. In particular, regulates energy homeostasis by promoting cold-induced brown or beige adipocyte differentiation program to generate heat from fatty acids and glucose. Has limited D-type phospholipase activity toward N-acyl lyso-NAPEs. In Pongo abelii (Sumatran orangutan), this protein is N-acyl-phosphatidylethanolamine-hydrolyzing phospholipase D (NAPEPLD).